A 474-amino-acid chain; its full sequence is MKLSMPRFDQAPVLVVGDVMLDRYWHGGTSRISPEAPVPVVKVEQIEDRPGGAANVALNIAALGAPASLVGVTGDDEAADSLSNSLKGAGVRALFQRIAHQPTIVKLRVMSRHQQLLRIDFEEPFATDALALGAQVDDLLEGIKVLVLSDYGKGALKNHQALIQAARAKGIPVLADPKGKDFSIYRGASLITPNLSEFEAIVGGCADEHELVTKGATLMHDLDLGALLVTRGEHGMTLLRPDHPALHLPARAREVFDVTGAGDTVISTLAAAIAAGEELPHAVALANLAAGIVVGKLGTAAISAPELRRAIQREEGSERGVLGLEQLLLAVADARAHNEKIVFTNGCFDILHAGHVTYLEQARAQGDRLIVAINDDASVSRLKGPGRPINSVDRRMAVLAGLGAVDWVISFAEGTPENLLREVKPDVLVKGGDYGIDQVVGADIVKAYGGAVKVLGLVENSSTTAIVEKIRKSE.

The interval 1-318 (MKLSMPRFDQ…RAIQREEGSE (318 aa)) is ribokinase. 194-197 (NLSE) contacts ATP. Residue Asp263 is part of the active site. A cytidylyltransferase region spans residues 343–474 (FTNGCFDILH…AIVEKIRKSE (132 aa)).

In the N-terminal section; belongs to the carbohydrate kinase PfkB family. This sequence in the C-terminal section; belongs to the cytidylyltransferase family. In terms of assembly, homodimer.

It carries out the reaction D-glycero-beta-D-manno-heptose 7-phosphate + ATP = D-glycero-beta-D-manno-heptose 1,7-bisphosphate + ADP + H(+). The enzyme catalyses D-glycero-beta-D-manno-heptose 1-phosphate + ATP + H(+) = ADP-D-glycero-beta-D-manno-heptose + diphosphate. It participates in nucleotide-sugar biosynthesis; ADP-L-glycero-beta-D-manno-heptose biosynthesis; ADP-L-glycero-beta-D-manno-heptose from D-glycero-beta-D-manno-heptose 7-phosphate: step 1/4. Its pathway is nucleotide-sugar biosynthesis; ADP-L-glycero-beta-D-manno-heptose biosynthesis; ADP-L-glycero-beta-D-manno-heptose from D-glycero-beta-D-manno-heptose 7-phosphate: step 3/4. In terms of biological role, catalyzes the phosphorylation of D-glycero-D-manno-heptose 7-phosphate at the C-1 position to selectively form D-glycero-beta-D-manno-heptose-1,7-bisphosphate. Its function is as follows. Catalyzes the ADP transfer from ATP to D-glycero-beta-D-manno-heptose 1-phosphate, yielding ADP-D-glycero-beta-D-manno-heptose. The polypeptide is Bifunctional protein HldE (Pseudomonas fluorescens (strain Pf0-1)).